The following is a 287-amino-acid chain: Ketoacyl reductase HetN (287 aa).

Residue 11 to 35 (LTGASRGLGVYIARALAKEQATVVC) coordinates NAD(+). Residue S142 participates in substrate binding. The active-site Proton acceptor is the Y155.

This sequence belongs to the short-chain dehydrogenases/reductases (SDR) family.

Functionally, may be involved in repressing heterocyst differentiation and may be essential for preventing all vegetative cells from differentiating. The polypeptide is Ketoacyl reductase HetN (hetN) (Nostoc sp. (strain PCC 7120 / SAG 25.82 / UTEX 2576)).